The following is a 690-amino-acid chain: SWI/SNF-related matrix-associated actin-dependent regulator of chromatin subfamily A-like protein 1 homolog (690 aa).

The disordered stretch occupies residues 30–49 (MQAAANATASTSSAAPPAPP). Positions 31-44 (QAAANATASTSSAA) are enriched in low complexity. An HARP domain is found at 92–170 (PTSLIKPTIG…AVKVELEPLP (79 aa)). Residues 209-367 (IFALERDGRI…FTQIRLIDHK (159 aa)) enclose the Helicase ATP-binding domain. 222–229 (DEMGLGKS) is an ATP binding site. The DESH box motif lies at 316–319 (DESH). A Nuclear localization signal motif is present at residues 411-428 (RRLKADVLKDLPEKRREV). The region spanning 482-639 (ILENYFYPDA…TFRTADKMHL (158 aa)) is the Helicase C-terminal domain.

This sequence belongs to the SNF2/RAD54 helicase family. SMARCAL1 subfamily.

The protein resides in the nucleus. It carries out the reaction ATP + H2O = ADP + phosphate + H(+). Its function is as follows. ATP-dependent annealing helicase that catalyzes the rewinding of the stably unwound DNA. The sequence is that of SWI/SNF-related matrix-associated actin-dependent regulator of chromatin subfamily A-like protein 1 homolog from Caenorhabditis elegans.